Consider the following 414-residue polypeptide: Glyco-Gag protein (414 aa).

Topologically, residues 1–51 are cytoplasmic; the sequence is MSGASSGTAIGAHLFGVSPECRVLIGDEGAGPSKSLSEVSFSVWYQSRAAR. A helical membrane pass occupies residues 52–72; that stretch reads LVIFCLVASFLVPCLTFLIAE. Residues 73–414 lie on the Extracellular side of the membrane; the sequence is TVMGQTIATP…TNLAQVKQVV (342 aa). Asn134 carries an N-linked (GlcNAc...) asparagine; by host glycan. Residues 171-282 form a disordered region; the sequence is VRPFLPPPKP…LREGPNNRPQ (112 aa). Over residues 174 to 193 the composition is skewed to pro residues; sequence FLPPPKPPTPLPQPLSPQPS. Residues 194–206 are compositionally biased toward low complexity; that stretch reads APLTSSLYPVLPK. The segment covering 210 to 220 has biased composition (pro residues); it reads PKPPVLPPDPS.

Glycosylated by host. In terms of processing, cleaved by host near the middle of the molecule, releasing the c-terminal half containing capsid and nucleoprotein domains op GAG.

The protein localises to the host cell membrane. Plays a role in viral particle release. Presumably acts by facilitating the fission of the virion bud at the cell surface. The chain is Glyco-Gag protein from Felidae (cat family).